A 139-amino-acid polypeptide reads, in one-letter code: Aspartate 1-decarboxylase (139 aa).

The active-site Schiff-base intermediate with substrate; via pyruvic acid is S25. Pyruvic acid (Ser) is present on S25. T57 contacts substrate. Y58 acts as the Proton donor in catalysis. 73–75 (GAA) is a binding site for substrate. Residues 117–139 (LGADPAEPVPGSDQARSPQAVTA) form a disordered region. A compositionally biased stretch (polar residues) spans 130–139 (QARSPQAVTA).

Belongs to the PanD family. In terms of assembly, heterooctamer of four alpha and four beta subunits. It depends on pyruvate as a cofactor. Is synthesized initially as an inactive proenzyme, which is activated by self-cleavage at a specific serine bond to produce a beta-subunit with a hydroxyl group at its C-terminus and an alpha-subunit with a pyruvoyl group at its N-terminus.

It is found in the cytoplasm. The enzyme catalyses L-aspartate + H(+) = beta-alanine + CO2. The protein operates within cofactor biosynthesis; (R)-pantothenate biosynthesis; beta-alanine from L-aspartate: step 1/1. Catalyzes the pyruvoyl-dependent decarboxylation of aspartate to produce beta-alanine. The polypeptide is Aspartate 1-decarboxylase (Streptomyces avermitilis (strain ATCC 31267 / DSM 46492 / JCM 5070 / NBRC 14893 / NCIMB 12804 / NRRL 8165 / MA-4680)).